Reading from the N-terminus, the 262-residue chain is 3-methyl-2-oxobutanoate hydroxymethyltransferase (262 aa).

The Mg(2+) site is built by aspartate 44 and aspartate 83. 3-methyl-2-oxobutanoate-binding positions include 44-45 (DS), aspartate 83, and lysine 112. Mg(2+) is bound at residue glutamate 114. Glutamate 181 (proton acceptor) is an active-site residue.

Belongs to the PanB family. In terms of assembly, homodecamer; pentamer of dimers. The cofactor is Mg(2+).

It is found in the cytoplasm. It carries out the reaction 3-methyl-2-oxobutanoate + (6R)-5,10-methylene-5,6,7,8-tetrahydrofolate + H2O = 2-dehydropantoate + (6S)-5,6,7,8-tetrahydrofolate. It functions in the pathway cofactor biosynthesis; (R)-pantothenate biosynthesis; (R)-pantoate from 3-methyl-2-oxobutanoate: step 1/2. Catalyzes the reversible reaction in which hydroxymethyl group from 5,10-methylenetetrahydrofolate is transferred onto alpha-ketoisovalerate to form ketopantoate. The sequence is that of 3-methyl-2-oxobutanoate hydroxymethyltransferase from Thiobacillus denitrificans (strain ATCC 25259 / T1).